The following is a 282-amino-acid chain: Putative phosphatase MPN_383 (282 aa).

Asp11 (nucleophile) is an active-site residue. A Mg(2+)-binding site is contributed by Asp11. Leu12 lines the phosphate pocket. Position 13 (Asp13) interacts with Mg(2+). Phosphate-binding positions include 45–46 (TG) and Lys207. Asp230 lines the Mg(2+) pocket. Phosphate is bound at residue Asn233.

This sequence belongs to the HAD-like hydrolase superfamily. Cof family. It depends on Mg(2+) as a cofactor.

This Mycoplasma pneumoniae (strain ATCC 29342 / M129 / Subtype 1) (Mycoplasmoides pneumoniae) protein is Putative phosphatase MPN_383.